The chain runs to 382 residues: S-adenosylmethionine synthase (382 aa).

Residue H15 participates in ATP binding. Residue D17 coordinates Mg(2+). E43 lines the K(+) pocket. L-methionine contacts are provided by E56 and Q99. The segment at 99–109 is flexible loop; that stretch reads QSGDIAQGVDR. ATP is bound by residues 164 to 166, 230 to 231, D239, 245 to 246, A262, and K266; these read DAK, KF, and RK. An L-methionine-binding site is contributed by D239. An L-methionine-binding site is contributed by K270.

The protein belongs to the AdoMet synthase family. As to quaternary structure, homotetramer; dimer of dimers. Mg(2+) serves as cofactor. It depends on K(+) as a cofactor.

It is found in the cytoplasm. The catalysed reaction is L-methionine + ATP + H2O = S-adenosyl-L-methionine + phosphate + diphosphate. It functions in the pathway amino-acid biosynthesis; S-adenosyl-L-methionine biosynthesis; S-adenosyl-L-methionine from L-methionine: step 1/1. Its function is as follows. Catalyzes the formation of S-adenosylmethionine (AdoMet) from methionine and ATP. The overall synthetic reaction is composed of two sequential steps, AdoMet formation and the subsequent tripolyphosphate hydrolysis which occurs prior to release of AdoMet from the enzyme. This is S-adenosylmethionine synthase from Dichelobacter nodosus (strain VCS1703A).